We begin with the raw amino-acid sequence, 1198 residues long: MTRSFRVEWTDGRKMADDKSNSIGDNSTNKRLWSSSIRGSALIFICALLAEPARATTHWVVTEDGKIQQQVDSPLNLKHPHHLVLFMQQETRVNYLKKLEKQLVAQKIHIEENEDRDTGLEQRHYKEDADCVTAKVPLGDLDLYDGTFISLESKDINPEQFLDLMSALPPDLEKPDCAKLLDLPYSIHAFQHLRGVQEKVNLTSPLLSKDDPIFTSLCLKLGQSVDEVGHRIHQALLKNSSSWVLYNLASFYWRIKNEPRRAVDCVVRALHFSPRQHKDVALVNMANVLHRAHFSADAAILAHAALDLTTDLLTSHYTLGNIYAMLGEYNHSVLCYEQALQAQPGFEQALRRKHAVLCQQKLEQRLEAQHRSLQRTLNELKEYQKQHDHYLRQQEMLDKHKLIQEEQILRNIIHETQMAKEAQLGNHQMCHMGQQKFTLHCPFDLPVRYHRGELFENVHYIQFGEEVSVASSVALVSELSVNESHSPQQSYTVSLGREPAAHWDKETTTTDESRTVLWPRRSDCAQRFPTIPPAYLLPTYYLPPESRNLKALNILLESISPPPSAKMPDCSLKNVVGNRDPLESMSWALEKELRDPQAAEVLLKRSGGRSLEQTGALIAQALEKMSGPRWMMQNEAGLFWRAKGNGTQALVCLRQALHSAPPQHRDLPLVNTANLLLHYGLHSEAHELLQQALQINQSEPHTLLSLVNVHLSQGNLTGALAVFRQALSLSVHCGQCRASLPLMRCLQFYPFLYNLQHQACSSGGACEVEEDSELEDWDTGSSSSGRQEVWDSDAMPVSALEDSLLFEKVVVDSNGSGEASGQDRTREPKAEGGEEEEQDWRLREELIGAFEGALDMNGKTGDLRGIRVLKNDRVMGARGGGPCFGNCEDDEGAEWITFQVKRVKKPKSDASEGWVGEGDVRQTEPTASNSILEISGPTIPSPGPSERWKDYSSLGWPGPEECQRTRRVDLTTVASTWLAVSAKNIDITEHIDFATPLQEPAVEPVCNANLPASMHTLDHLSGVANRGGIHYTGESQLREVLQNLGKDKFPSQSFEQVGTRIAKVLEKNQTSWVLSSMAALYWRVKGQGKRAIDCLRQALNYAPHHMKDVPLISLANIFQNARLWEDALTVARMAVEIAPHFVVNHFTLANVYIAMEEFEKAMHWYESTLKLQPEFGPAKDRLRTIQCYLLSKRDRRAP.

Residues 313-346 (LTSHYTLGNIYAMLGEYNHSVLCYEQALQAQPGF) form a TPR 1 repeat. Positions 358–399 (CQQKLEQRLEAQHRSLQRTLNELKEYQKQHDHYLRQQEMLDK) form a coiled coil. 2 TPR repeats span residues 630 to 663 (WMMQ…APPQ) and 700 to 733 (PHTL…SVHC). 2 disordered regions span residues 771 to 792 (DSEL…VWDS) and 814 to 839 (NGSG…EEQD). Positions 821-832 (GQDRTREPKAEG) are enriched in basic and acidic residues. 3 TPR repeats span residues 1071–1105 (SWVL…APHH), 1108–1141 (DVPL…APHF), and 1142–1175 (VVNH…QPEF).

The protein belongs to the TTC17 family.

It localises to the cytoplasm. The protein resides in the cell membrane. The protein localises to the cytoskeleton. Plays a role in primary ciliogenesis by modulating actin polymerization. The chain is Tetratricopeptide repeat protein 17 (ttc17) from Danio rerio (Zebrafish).